The chain runs to 338 residues: Ketol-acid reductoisomerase (NADP(+)) (338 aa).

A KARI N-terminal Rossmann domain is found at 1-181 (MQVYYDKDCD…GGGRTGIIET (181 aa)). Residues 24–27 (YGSQ), arginine 47, serine 50, serine 52, and 82–85 (DEFQ) contribute to the NADP(+) site. Histidine 107 is an active-site residue. Position 133 (glycine 133) interacts with NADP(+). In terms of domain architecture, KARI C-terminal knotted spans 182-327 (TFKDETETDL…EKLRGMMPWI (146 aa)). Mg(2+)-binding residues include aspartate 190, glutamate 194, glutamate 226, and glutamate 230. Serine 251 contributes to the substrate binding site.

It belongs to the ketol-acid reductoisomerase family. Mg(2+) serves as cofactor.

It catalyses the reaction (2R)-2,3-dihydroxy-3-methylbutanoate + NADP(+) = (2S)-2-acetolactate + NADPH + H(+). The enzyme catalyses (2R,3R)-2,3-dihydroxy-3-methylpentanoate + NADP(+) = (S)-2-ethyl-2-hydroxy-3-oxobutanoate + NADPH + H(+). Its pathway is amino-acid biosynthesis; L-isoleucine biosynthesis; L-isoleucine from 2-oxobutanoate: step 2/4. The protein operates within amino-acid biosynthesis; L-valine biosynthesis; L-valine from pyruvate: step 2/4. Its function is as follows. Involved in the biosynthesis of branched-chain amino acids (BCAA). Catalyzes an alkyl-migration followed by a ketol-acid reduction of (S)-2-acetolactate (S2AL) to yield (R)-2,3-dihydroxy-isovalerate. In the isomerase reaction, S2AL is rearranged via a Mg-dependent methyl migration to produce 3-hydroxy-3-methyl-2-ketobutyrate (HMKB). In the reductase reaction, this 2-ketoacid undergoes a metal-dependent reduction by NADPH to yield (R)-2,3-dihydroxy-isovalerate. In Alcanivorax borkumensis (strain ATCC 700651 / DSM 11573 / NCIMB 13689 / SK2), this protein is Ketol-acid reductoisomerase (NADP(+)).